We begin with the raw amino-acid sequence, 2224 residues long: Myomegalin (2224 aa).

Coiled coils occupy residues 41–97 (REDV…RQQE), 162–205 (DQYS…LLEE), 236–318 (VSES…REML), and 350–682 (CSQL…ALRQ). The segment at 206–236 (PASMEVQPVPKGLPTQQKPDLHETPTTQPPV) is disordered. A compositionally biased stretch (polar residues) spans 219 to 236 (PTQQKPDLHETPTTQPPV). The tract at residues 703-751 (GVTSIGPHHGEQTDQGSMQMPSRDDSTSLTAREEASIPRSTLGDSDTVA) is disordered. A Phosphothreonine modification is found at threonine 705. Residues 724–738 (SRDDSTSLTAREEAS) show a composition bias toward basic and acidic residues. 3 coiled-coil regions span residues 745–822 (GDSD…QLVD), 856–886 (NKRQ…RQLY), and 949–986 (AQEM…AGFS). 3 disordered regions span residues 1098-1128 (TGLP…SLPL), 1141-1161 (NKSQ…GSTK), and 1270-1298 (VSPP…DDSS). The span at 1112-1124 (ENTTTARPGSRPQ) shows a compositional bias: polar residues. 3 coiled-coil regions span residues 1159 to 1187 (STKH…SEAT), 1295 to 1331 (DDSS…LSAT), and 1377 to 1401 (GLQA…LPKT). Positions 1276-1298 (KPLENKPGKQEEFRAHGTPDDSS) are enriched in basic and acidic residues. The Olduvai domain occupies 1497–1588 (KDHKSEKEEA…DEKKPSPSHS (92 aa)). Disordered regions lie at residues 1576–1637 (THYD…SLSQ), 1736–1757 (SSGQ…LSSG), 1805–1824 (LSST…QGLE), and 1962–2001 (KASL…LNSP). Residues 1599 to 1609 (ESSSSPISLPT) are compositionally biased toward polar residues. Residues 1748–1757 (GSVSGELSSG) show a composition bias toward low complexity. Positions 1769 to 1958 (GADLLEEHLG…RLQLEQQMDR (190 aa)) form a coiled coil. Residues 2148-2191 (KEGQLMEKELLDLRAQVSQQEQILQNTAARLKRANQRKKSMEQF) are a coiled coil.

Interacts with PDE4D. Isoform 2 interacts with MAPRE1 and MAPRE3. Isoform 2 forms a pericentrosomal complex with AKAP9, CDK5RAP2 and EB1/MAPRE1; within this complex, may mediate MAPRE1-binding to CDK5RAP2. Interaction with AKAP9 stabilizes both proteins. Isoform 2 interacts (via N-terminus) with CAMSAP2; this interaction is much stronger in the presence of AKAP9. In complex with AKAP9, Isoform 2 recruits CAMSAP2 to the Golgi apparatus. Isoform 2 interacts with unglycosylated LGALS3BP; this interaction may connect the pericentrosomal complex to the gamma-tubulin ring complex (gamma-TuRC) to promote microtubule assembly and acetylation.

Its subcellular location is the cytoplasm. It localises to the cytoskeleton. The protein localises to the microtubule organizing center. It is found in the centrosome. The protein resides in the golgi apparatus. Functions as an anchor sequestering components of the cAMP-dependent pathway to Golgi and/or centrosomes. Functionally, participates in microtubule dynamics, promoting microtubule assembly. Depending upon the cell context, may act at the level of the Golgi apparatus or that of the centrosome. In complex with AKAP9, recruits CAMSAP2 to the Golgi apparatus and tethers non-centrosomal minus-end microtubules to the Golgi, an important step for polarized cell movement. In complex with AKAP9, EB1/MAPRE1 and CDK5RAP2, contributes to microtubules nucleation and extension from the centrosome to the cell periphery, a crucial process for directed cell migration, mitotic spindle orientation and cell-cycle progression. The polypeptide is Myomegalin (Pde4dip) (Mus musculus (Mouse)).